Here is a 216-residue protein sequence, read N- to C-terminus: 3,4-dihydroxy-2-butanone 4-phosphate synthase (216 aa).

D-ribulose 5-phosphate contacts are provided by residues R33–E34, D38, R146–T150, and E170. E34 provides a ligand contact to Mg(2+). H149 provides a ligand contact to Mg(2+).

The protein belongs to the DHBP synthase family. In terms of assembly, homodimer. It depends on Mg(2+) as a cofactor. Mn(2+) serves as cofactor.

The enzyme catalyses D-ribulose 5-phosphate = (2S)-2-hydroxy-3-oxobutyl phosphate + formate + H(+). It participates in cofactor biosynthesis; riboflavin biosynthesis; 2-hydroxy-3-oxobutyl phosphate from D-ribulose 5-phosphate: step 1/1. Catalyzes the conversion of D-ribulose 5-phosphate to formate and 3,4-dihydroxy-2-butanone 4-phosphate. The chain is 3,4-dihydroxy-2-butanone 4-phosphate synthase from Pseudomonas putida (strain ATCC 47054 / DSM 6125 / CFBP 8728 / NCIMB 11950 / KT2440).